Here is a 1234-residue protein sequence, read N- to C-terminus: DNA-directed RNA polymerase subunit beta (1234 aa).

It belongs to the RNA polymerase beta chain family. The RNAP catalytic core consists of 2 alpha, 1 beta, 1 beta' and 1 omega subunit. When a sigma factor is associated with the core the holoenzyme is formed, which can initiate transcription.

The catalysed reaction is RNA(n) + a ribonucleoside 5'-triphosphate = RNA(n+1) + diphosphate. Functionally, DNA-dependent RNA polymerase catalyzes the transcription of DNA into RNA using the four ribonucleoside triphosphates as substrates. This chain is DNA-directed RNA polymerase subunit beta, found in Clostridium perfringens (strain ATCC 13124 / DSM 756 / JCM 1290 / NCIMB 6125 / NCTC 8237 / Type A).